The following is a 120-amino-acid chain: Dense granule protein 5 (120 aa).

A signal peptide spans 1-25 (MASVKRVVVAVMIVNVLALIFVGVA). The tract at residues 27–59 (STRDVGSGGDDSEGARGREQQQVQQHEQNEDRS) is disordered. The chain crosses the membrane as a helical span at residues 76 to 93 (AVGLAAAVVAVVSLLRLL). Basic and acidic residues predominate over residues 100–109 (AIQEESKESA). A disordered region spans residues 100-120 (AIQEESKESATAEEEEVAEEE). The span at 110 to 120 (TAEEEEVAEEE) shows a compositional bias: acidic residues.

It localises to the secreted. Its subcellular location is the parasitophorous vacuole lumen. The protein resides in the parasitophorous vacuole membrane. It is found in the cytoplasmic vesicle. The protein localises to the secretory vesicle. In terms of biological role, plays a role in the function of the cyst and parasitophorous vacuole membranes and therefore in host-parasite interactions. The sequence is that of Dense granule protein 5 (GRA5) from Toxoplasma gondii.